The sequence spans 311 residues: Acetaldehyde dehydrogenase 1 (311 aa).

11–14 contributes to the NAD(+) binding site; sequence SGNI. C129 serves as the catalytic Acyl-thioester intermediate. NAD(+)-binding positions include 161-169 and N288; that span reads SAGPGTRAN.

Belongs to the acetaldehyde dehydrogenase family.

The catalysed reaction is acetaldehyde + NAD(+) + CoA = acetyl-CoA + NADH + H(+). The sequence is that of Acetaldehyde dehydrogenase 1 from Novosphingobium aromaticivorans (strain ATCC 700278 / DSM 12444 / CCUG 56034 / CIP 105152 / NBRC 16084 / F199).